We begin with the raw amino-acid sequence, 625 residues long: Probable potassium transport system protein Kup 2 (625 aa).

A run of 12 helical transmembrane segments spans residues 15–35 (LSFA…LYAF), 52–72 (ILSL…LVIV), 98–118 (GGWL…DGML), 134–154 (LSPN…FFLF), 164–184 (IGVY…ILGF), 212–232 (LALF…ALFA), 246–266 (WFAV…ALVL), 284–304 (FLPV…QAII), 336–356 (VYLP…VVIF), 365–385 (AYGI…GIIA), 394–414 (FKIL…AGNI), and 417–437 (LLTG…VMYT).

It belongs to the HAK/KUP transporter (TC 2.A.72) family.

It is found in the cell inner membrane. The enzyme catalyses K(+)(in) + H(+)(in) = K(+)(out) + H(+)(out). In terms of biological role, transport of potassium into the cell. Likely operates as a K(+):H(+) symporter. The polypeptide is Probable potassium transport system protein Kup 2 (Legionella pneumophila (strain Corby)).